The following is a 320-amino-acid chain: Malate dehydrogenase (320 aa).

NAD(+) is bound by residues 10-15 (GAGQIG) and Asp34. 2 residues coordinate substrate: Arg83 and Arg89. NAD(+) contacts are provided by residues Asn96 and 119–121 (ITN). Substrate contacts are provided by Asn121 and Arg152. His176 (proton acceptor) is an active-site residue.

The protein belongs to the LDH/MDH superfamily. MDH type 3 family.

The catalysed reaction is (S)-malate + NAD(+) = oxaloacetate + NADH + H(+). Catalyzes the reversible oxidation of malate to oxaloacetate. The protein is Malate dehydrogenase of Ruegeria pomeroyi (strain ATCC 700808 / DSM 15171 / DSS-3) (Silicibacter pomeroyi).